We begin with the raw amino-acid sequence, 471 residues long: Coagulation factor IX (471 aa).

The N-terminal stretch at 1–28 (MKHLNTVMAESPALITIFLLGYLLSTEC) is a signal peptide. The propeptide occupies 29-46 (AVFLDRENATKILTRPKR). Positions 47, 48, 53, 54, 61, 63, 66, 67, 72, 73, and 76 each coordinate Ca(2+). In terms of domain architecture, Gla spans 47 to 92 (YNSGKLEEFVRGNLERECIEERCSFEEAREVFENTEKTTEFWKQYV). 4-carboxyglutamate is present on residues Glu53, Glu54, Glu61, Glu63, Glu66, Glu67, Glu72, Glu73, Glu76, Glu79, and Glu82. Residue Glu61 coordinates Mg(2+). Residues Cys64 and Cys69 are joined by a disulfide bond. Residue Glu66 coordinates Mg(2+). Residue Glu72 participates in Mg(2+) binding. Residue Glu76 coordinates Mg(2+). Glu82 serves as a coordination point for Ca(2+). Glu82 provides a ligand contact to Mg(2+). O-linked (GalNAc...) threonine glycosylation is present at Thr85. Ca(2+) contacts are provided by Glu86, Asp93, Gly94, and Gln96. Glu86 is modified (4-carboxyglutamate). A Mg(2+)-binding site is contributed by Glu86. The region spanning 93 to 129 (DGDQCESNPCLNGGICKDDISSYECWCQVGFEGRNCE) is the EGF-like 1; calcium-binding domain. 10 cysteine pairs are disulfide-bonded: Cys97-Cys108, Cys102-Cys117, Cys119-Cys128, Cys134-Cys145, Cys141-Cys155, Cys157-Cys170, Cys178-Cys345, Cys262-Cys278, Cys392-Cys406, and Cys417-Cys445. O-linked (Glc...) serine glycosylation is present at Ser99. The Ca(2+) site is built by Asp110 and Asp111. Asp110 carries the (3R)-3-hydroxyaspartate modification. Ser114 is modified (phosphoserine). The EGF-like 2 domain maps to 130–171 (LDATCNIKNGRCKQFCKNSPDNKVICSCTEGYQLAEDQKSCE). The propeptide at 193–236 (AETVFSNMDYENSTEAVFIQDDITDGAILNNVTESSESLNDFTR) is activation peptide. Tyr202 is subject to Sulfotyrosine. Asn204 is a glycosylation site (N-linked (GlcNAc...) asparagine). At Ser205 the chain carries Phosphoserine. The residue at position 206 (Thr206) is a Phosphothreonine; alternate. Thr206 is a glycosylation site (O-linked (GalNAc...) threonine; alternate). Asn223 is a glycosylation site (N-linked (GlcNAc...) asparagine). Residues Thr225 and Thr235 are each glycosylated (O-linked (GalNAc...) threonine). The region spanning 237-469 (VVGGENAKPG…YVNWIKEKTK (233 aa)) is the Peptidase S1 domain. The Charge relay system role is filled by His277. Ca(2+)-binding residues include Glu291, Asn293, Glu298, and Glu301. Asp325 (charge relay system) is an active-site residue. The active-site Charge relay system is the Ser421.

This sequence belongs to the peptidase S1 family. As to quaternary structure, heterodimer of a light chain and a heavy chain; disulfide-linked. Interacts (inactive and activated) with F11 (activated) in calcium-dependent manner. Interacts with SERPINC1. Activated by factor XIa, which excises the activation peptide. The propeptide can also be removed by snake venom protease. Activated by coagulation factor VIIa-tissue factor (F7-F3) complex in calcium-dependent manner. In terms of processing, the iron and 2-oxoglutarate dependent 3-hydroxylation of aspartate and asparagine is (R) stereospecific within EGF domains. Post-translationally, predominantly O-glucosylated at Ser-99 by POGLUT1 in vitro. As to expression, detected in liver.

It localises to the secreted. It carries out the reaction Selective cleavage of Arg-|-Ile bond in factor X to form factor Xa.. Factor IX is a vitamin K-dependent plasma protein that participates in the intrinsic pathway of blood coagulation by converting factor X to its active form in the presence of Ca(2+) ions, phospholipids, and factor VIIIa. The sequence is that of Coagulation factor IX (F9) from Mus musculus (Mouse).